Consider the following 152-residue polypeptide: Transcriptional regulator MraZ (152 aa).

SpoVT-AbrB domains are found at residues 5–52 (HSNR…PMPE) and 81–124 (ATEV…DQGR).

This sequence belongs to the MraZ family. In terms of assembly, forms oligomers.

It is found in the cytoplasm. The protein localises to the nucleoid. This chain is Transcriptional regulator MraZ, found in Solidesulfovibrio magneticus (strain ATCC 700980 / DSM 13731 / RS-1) (Desulfovibrio magneticus).